Consider the following 104-residue polypeptide: Cytochrome c-552 (104 aa).

Positions 1–23 are cleaved as a signal peptide; that stretch reads MHLHLRGICLVLAVASSSSSALA. Residues C37, C40, H41, and M82 each coordinate heme c.

It belongs to the cytochrome c family. Monoheme monomer. Has the tendency to dimerize. Post-translationally, binds 1 heme c group covalently per subunit.

The protein resides in the periplasm. The sequence is that of Cytochrome c-552 (cycB) from Bradyrhizobium diazoefficiens (strain JCM 10833 / BCRC 13528 / IAM 13628 / NBRC 14792 / USDA 110).